A 345-amino-acid polypeptide reads, in one-letter code: Transcription factor STKL1 (345 aa).

Positions 1 to 145 (MASLENPAID…KKGHAQRVWS (145 aa)) are disordered. Residues 11–22 (SSSEFESSSEEI) show a composition bias toward low complexity. The segment covering 23 to 32 (SSSKESKPKE) has biased composition (basic and acidic residues). Polar residues predominate over residues 37–46 (VPSTKTLNSP). S105 is modified (phosphoserine). Over residues 114 to 137 (RASEGTTSRDMHVKRIKKEGDNKK) the composition is skewed to basic and acidic residues.

This sequence belongs to the GeBP family. As to expression, expressed strongly in leaves and flowers, weakly in roots, and very weakly in stems.

It localises to the nucleus. In terms of biological role, transcription repressor that binds DNA in a sequence-specific manner, 5'-GCCT-3', to regulate the expression of PGR. Acts as a modulatory component for the glucose-triggered developmental leaf growth process. The sequence is that of Transcription factor STKL1 from Arabidopsis thaliana (Mouse-ear cress).